A 455-amino-acid polypeptide reads, in one-letter code: Glutamate--tRNA ligase (455 aa).

Positions 8 to 18 match the 'HIGH' region motif; it reads PSPTGYLHIGG. Residues 231–235 carry the 'KMSKS' region motif; it reads RLSKR. Position 234 (lysine 234) interacts with ATP.

This sequence belongs to the class-I aminoacyl-tRNA synthetase family. Glutamate--tRNA ligase type 1 subfamily. Monomer.

It localises to the cytoplasm. It carries out the reaction tRNA(Glu) + L-glutamate + ATP = L-glutamyl-tRNA(Glu) + AMP + diphosphate. Catalyzes the attachment of glutamate to tRNA(Glu) in a two-step reaction: glutamate is first activated by ATP to form Glu-AMP and then transferred to the acceptor end of tRNA(Glu). The chain is Glutamate--tRNA ligase from Vesicomyosocius okutanii subsp. Calyptogena okutanii (strain HA).